A 442-amino-acid chain; its full sequence is MKPTIVLVGRPNVGKSTLFNRLTKTRDALVADQPGLTRDRHYGIGRVGDRDYLVVDTAGFDPVAKDGIMHEMARQAEQAIAEADALLFMVDGRSGLTPHDEQIAARLRRAGRPVYLVVNKSEGMERTMVAAEFHALGLGDPLPVSASHGEGVKQLLDLVLGAFPPDVEPEEDEGRTPRIAIVGRPNVGKSTFVNSLLGEERVIAFDMPGTTRDAIAIPFERDGRHYTLIDTAGLRRRGKVFEAVEKFSVIKTLQAIEQANVVVLVLDASQDISDQDAHIAGFILEAGRALVVAVNKWDDVDDYRRELIKQDLTRKLNFLSFARFHYISALKGAGVAAVMKSVDAAYAAAMVNLSTPRLTRTMQAALAKQAPPRHGVFRPKMRYAHQGGNNPPVVVIHGAALDHVPTSYVRYLERTFMEAFKLQGTPLRIQFRTAHNPFIGKE.

2 consecutive EngA-type G domains span residues 3 to 167 (PTIV…PPDV) and 177 to 350 (PRIA…AAAM). Residues 9-16 (GRPNVGKS), 56-60 (DTAGF), 119-122 (NKSE), 183-190 (GRPNVGKS), 230-234 (DTAGL), and 295-298 (NKWD) contribute to the GTP site. Residues 351–435 (VNLSTPRLTR…PLRIQFRTAH (85 aa)) enclose the KH-like domain.

The protein belongs to the TRAFAC class TrmE-Era-EngA-EngB-Septin-like GTPase superfamily. EngA (Der) GTPase family. As to quaternary structure, associates with the 50S ribosomal subunit.

Functionally, GTPase that plays an essential role in the late steps of ribosome biogenesis. This chain is GTPase Der, found in Aromatoleum aromaticum (strain DSM 19018 / LMG 30748 / EbN1) (Azoarcus sp. (strain EbN1)).